The chain runs to 150 residues: Transcriptional repressor NrdR (150 aa).

A zinc finger spans residues 3-34 (CPFCAHPDSKVVDSRPDKGGAAIRRRRECESC). One can recognise an ATP-cone domain in the interval 49-139 (PLVLKKDGRR…VYRSFKDVNE (91 aa)).

The protein belongs to the NrdR family. Zn(2+) is required as a cofactor.

Its function is as follows. Negatively regulates transcription of bacterial ribonucleotide reductase nrd genes and operons by binding to NrdR-boxes. The chain is Transcriptional repressor NrdR from Geobacter metallireducens (strain ATCC 53774 / DSM 7210 / GS-15).